A 246-amino-acid chain; its full sequence is Uroporphyrinogen-III synthase (246 aa).

The protein belongs to the uroporphyrinogen-III synthase family. As to quaternary structure, monomer.

It catalyses the reaction hydroxymethylbilane = uroporphyrinogen III + H2O. The protein operates within porphyrin-containing compound metabolism; protoporphyrin-IX biosynthesis; coproporphyrinogen-III from 5-aminolevulinate: step 3/4. Functionally, catalyzes cyclization of the linear tetrapyrrole, hydroxymethylbilane, to the macrocyclic uroporphyrinogen III. This is Uroporphyrinogen-III synthase (hemD) from Escherichia coli (strain K12).